A 505-amino-acid chain; its full sequence is Histidine ammonia-lyase (505 aa).

Residues Ala-144 to Gly-146 constitute a cross-link (5-imidazolinone (Ala-Gly)). Ser-145 carries the post-translational modification 2,3-didehydroalanine (Ser).

Belongs to the PAL/histidase family. In terms of processing, contains an active site 4-methylidene-imidazol-5-one (MIO), which is formed autocatalytically by cyclization and dehydration of residues Ala-Ser-Gly.

It localises to the cytoplasm. The catalysed reaction is L-histidine = trans-urocanate + NH4(+). The protein operates within amino-acid degradation; L-histidine degradation into L-glutamate; N-formimidoyl-L-glutamate from L-histidine: step 1/3. This Legionella pneumophila (strain Corby) protein is Histidine ammonia-lyase.